Consider the following 211-residue polypeptide: tRNA (guanine-N(7)-)-methyltransferase (211 aa).

The S-adenosyl-L-methionine site is built by Glu44, Asp69, Asp96, and Asp118. Residue Asp118 is part of the active site. A substrate-binding site is contributed by Lys122. Positions 124-129 are interaction with RNA; it reads RHEKRR. Residues Asp154 and 191–194 contribute to the substrate site; that span reads TEYE.

It belongs to the class I-like SAM-binding methyltransferase superfamily. TrmB family.

It catalyses the reaction guanosine(46) in tRNA + S-adenosyl-L-methionine = N(7)-methylguanosine(46) in tRNA + S-adenosyl-L-homocysteine. It participates in tRNA modification; N(7)-methylguanine-tRNA biosynthesis. Catalyzes the formation of N(7)-methylguanine at position 46 (m7G46) in tRNA. This Streptococcus equi subsp. zooepidemicus (strain MGCS10565) protein is tRNA (guanine-N(7)-)-methyltransferase.